A 416-amino-acid polypeptide reads, in one-letter code: Transcription factor PIL1 (416 aa).

Disordered stretches follow at residues 1 to 24, 89 to 113, and 197 to 231; these read MEAK…NIKP, VSQS…KLKS, and ESTY…KRST. A compositionally biased stretch (low complexity) spans 8-22; sequence SSSSEPNMISPSSNI. Residues 95–124 adopt a coiled-coil conformation; that stretch reads QQDKETNEQMNNNKKKLKSSKIEFERNVSK. Positions 216–229 are enriched in basic residues; sequence VHARTRKPVTKRKR. The region spanning 229 to 278 is the bHLH domain; that stretch reads RSTEVHKLYERKRRDEFNKKMRALQDLLPNCYKDDKASLLDEAIKYMRTL.

Homodimer. Interacts with APRR1/TOC1. Associates to PTAC12/HMR/PAP5 which acts as a transcriptional coactivator. Mainly expressed in stems, fruits and flowers and, to a lower extent, in leaves, seedlings and roots. Accumulates in etiolated seedlings.

The protein resides in the nucleus. Functionally, transcription factor. Involved in responses to transient and long-term shade. Required for the light-mediated inhibition of hypocotyl elongation. Necessary for rapid light-induced expression of the photomorphogenesis- and circadian-related gene APRR9. Seems to play a role in multiple PHYB responses, such as flowering transition and petiole elongation. This Arabidopsis thaliana (Mouse-ear cress) protein is Transcription factor PIL1.